The chain runs to 250 residues: Ubiquinone/menaquinone biosynthesis C-methyltransferase UbiE (250 aa).

Residues S73, D94, and 122-123 each bind S-adenosyl-L-methionine; that span reads NA.

The protein belongs to the class I-like SAM-binding methyltransferase superfamily. MenG/UbiE family.

The catalysed reaction is a 2-demethylmenaquinol + S-adenosyl-L-methionine = a menaquinol + S-adenosyl-L-homocysteine + H(+). It carries out the reaction a 2-methoxy-6-(all-trans-polyprenyl)benzene-1,4-diol + S-adenosyl-L-methionine = a 5-methoxy-2-methyl-3-(all-trans-polyprenyl)benzene-1,4-diol + S-adenosyl-L-homocysteine + H(+). It participates in quinol/quinone metabolism; menaquinone biosynthesis; menaquinol from 1,4-dihydroxy-2-naphthoate: step 2/2. It functions in the pathway cofactor biosynthesis; ubiquinone biosynthesis. Functionally, methyltransferase required for the conversion of demethylmenaquinol (DMKH2) to menaquinol (MKH2) and the conversion of 2-polyprenyl-6-methoxy-1,4-benzoquinol (DDMQH2) to 2-polyprenyl-3-methyl-6-methoxy-1,4-benzoquinol (DMQH2). The polypeptide is Ubiquinone/menaquinone biosynthesis C-methyltransferase UbiE (Legionella pneumophila (strain Lens)).